We begin with the raw amino-acid sequence, 468 residues long: RUS family member 1 (468 aa).

The residue at position 2 (Ala-2) is an N-acetylalanine. Thr-49 is modified (phosphothreonine). The helical transmembrane segment at 247-267 threads the bilayer; that stretch reads LLMLPLVSGCPGFSLGCFFFL.

The protein belongs to the RUS1 family.

It localises to the membrane. This is RUS family member 1 (Rusf1) from Pongo abelii (Sumatran orangutan).